A 279-amino-acid chain; its full sequence is NAD kinase (279 aa).

The Proton acceptor role is filled by D61. Residues 61–62 (DG), 138–139 (ND), K149, K166, D168, and 179–184 (TGYSFS) contribute to the NAD(+) site.

The protein belongs to the NAD kinase family. A divalent metal cation serves as cofactor.

It localises to the cytoplasm. The enzyme catalyses NAD(+) + ATP = ADP + NADP(+) + H(+). In terms of biological role, involved in the regulation of the intracellular balance of NAD and NADP, and is a key enzyme in the biosynthesis of NADP. Catalyzes specifically the phosphorylation on 2'-hydroxyl of the adenosine moiety of NAD to yield NADP. The protein is NAD kinase of Borreliella burgdorferi (strain ATCC 35210 / DSM 4680 / CIP 102532 / B31) (Borrelia burgdorferi).